We begin with the raw amino-acid sequence, 266 residues long: MKNPHLNSPCKILNTVSGDKKMKRKAREPIKHVSEDHYPYFKLYKNPHLMAETLGDGSPQETHRSEIITSRDDSVRNDVLNTAVDMRINTITAAEVPDSKLRSVSEKTVNSKIVQASPQVSVLSAPQVFPLERVVLSQRAASQAPAGGSERAESPRKRAGEPSGVVTEIKAIQQTRRLLANARERTRVHTISAAFEALRKQVPCYSYGQKLSKLAILRIACNYILSLAQLADLDYTPDHRNMSFRECVEQCTRTLQAEGRSKKRKE.

The tract at residues 140–164 (AASQAPAGGSERAESPRKRAGEPSG) is disordered. Residues 150–160 (ERAESPRKRAG) show a composition bias toward basic and acidic residues. The segment at 175–188 (TRRLLANARERTRV) is basic motif; degenerate. The bHLH domain maps to 175–227 (TRRLLANARERTRVHTISAAFEALRKQVPCYSYGQKLSKLAILRIACNYILSL). The interval 189 to 227 (HTISAAFEALRKQVPCYSYGQKLSKLAILRIACNYILSL) is helix-loop-helix motif.

Its subcellular location is the nucleus. It localises to the nucleus speckle. It is found in the cytoplasm. Its function is as follows. Transcription factor that binds a palindromic (canonical) core consensus DNA sequence 5'-CANNTG- 3' known as an E-box element, possibly as a heterodimer with other bHLH proteins. During development, is required for heart looping and swim bladder formation by acting in concert with GATA4 and ZFPM1. During the development of both the retina and skeletal muscles is required for neural retinal cell through modulating PAX6 and NEUROG3 expression and myogenic differentiation. The polypeptide is Transcription factor atoh8 (Danio rerio (Zebrafish)).